A 165-amino-acid polypeptide reads, in one-letter code: Putative glycine-rich cell wall structural protein 1 (165 aa).

The signal sequence occupies residues 1–23; the sequence is MARKVIALAFLLLLTISLSKSNA. R2; Tyr-rich repeat units lie at residues 56–62 and 93–99; these read GYGYGYG. The tract at residues 105 to 125 is disordered; sequence AQGQGSGGGGGGGGGGGGGGS. An R2; Tyr-rich repeat occupies 132–138; the sequence is GYGYGYG. The segment at 146–165 is disordered; the sequence is GGGGGGGGGGGGSGYVGKHE.

Its subcellular location is the secreted. It is found in the cell wall. Responsible for plasticity of the cell wall. The chain is Putative glycine-rich cell wall structural protein 1 (GRP-1) from Oryza sativa subsp. indica (Rice).